The primary structure comprises 450 residues: tRNA modification GTPase MnmE (450 aa).

(6S)-5-formyl-5,6,7,8-tetrahydrofolate contacts are provided by R25, E83, and K122. One can recognise a TrmE-type G domain in the interval 218–377 (GFKVAIIGKP…QMEALLDSIG (160 aa)). K(+) is bound at residue N228. Residues 228–233 (NVGKSS), 247–253 (SDIAGTT), and 272–275 (DTAG) contribute to the GTP site. S232 lines the Mg(2+) pocket. K(+) is bound by residues S247, I249, and T252. T253 provides a ligand contact to Mg(2+). Position 450 (K450) interacts with (6S)-5-formyl-5,6,7,8-tetrahydrofolate.

Belongs to the TRAFAC class TrmE-Era-EngA-EngB-Septin-like GTPase superfamily. TrmE GTPase family. As to quaternary structure, homodimer. Heterotetramer of two MnmE and two MnmG subunits. The cofactor is K(+).

Its subcellular location is the cytoplasm. Exhibits a very high intrinsic GTPase hydrolysis rate. Involved in the addition of a carboxymethylaminomethyl (cmnm) group at the wobble position (U34) of certain tRNAs, forming tRNA-cmnm(5)s(2)U34. The protein is tRNA modification GTPase MnmE of Sulfurovum sp. (strain NBC37-1).